Consider the following 621-residue polypeptide: MSPVFPMLTVLTMFYYMCLRRRARTATRGEIMNSHRTVESNSRTSPLNAEVVQYAKEVVDFSSHYGSENSMSYTMWNLAGVPNVFPSSGDFTQTAVFRTYGTWWDQCPSAPVPFKRTPANFQSQDYVELAFEQQVYPTAVHVLETYHPGAVIRILACSANPYSPGPPAEVRWETLWSEKPTKVNASQARQFKPCIKQINFPTNLIRLEINSSLLDYYTELDAVVLHGMKDKPMLSLKTSLIDMNDLDEDDYEEKDDCEIDNLNKKFSSTALREGPSNGYFDKLPYELIQLILNHLTLPDLCRLAQTCKLLNQHCCDPLQYIHLNLQPYWAKLNDTSLEFLQARCTLVQWLNLSWTGNRGFISVAGFSRFLKVCGSELVRLELSCSHFLNETCLEIISEMCPNLQDLNLSSCDKLPPQAFSHIAKLCGLKRLVLYRTKVEQTALLSILNFCSDLQHLSLGSCVMIEDYDVTASMIGAKCKKLRTLDLWRCKNITESGIAELASGCPLLEELDLGWCPTLQSSTGCFARLARQLPNLQKLFLTANRSVCDTDIEELASNCTRLRQLDILGTRMVSPASLRKLLESCKDLSLLDVSFCSQIDNRAVLELSASFPKVFIKKSFTQ.

An Asymmetric dimethylarginine modification is found at R28. In terms of domain architecture, F-box spans 277–332; that stretch reads NGYFDKLPYELIQLILNHLTLPDLCRLAQTCKLLNQHCCDPLQYIHLNLQPYWAKL. 9 LRR repeats span residues 376–397, 402–421, 427–448, 452–474, 480–501, 504–524, 532–558, 559–583, and 584–609; these read ELVR…EIIS, NLQD…AFSH, GLKR…SILN, DLQH…ASMI, KLRT…AELA, CPLL…STGC, LPNL…ASNC, TRLR…LLES, and CKDL…LSAS.

Part of a SCF (SKP1-CUL1-F-box) protein ligase complex. Interacts with FAF2 and VCP. Interacts with PPTC7; this interaction promotes destruction of BNIP3 and NIX and mitophagy suppression.

It localises to the cytoplasm. The protein resides in the nucleus. Its subcellular location is the mitochondrion outer membrane. Substrate-recognition component of the mitochondria-localized SCF-FBXL4 ubiquitin E3 ligase complex that plays a role in the restriction of mitophagy by controlling the degradation of BNIP3 and NIX mitophagy receptors. Also rescues mitochondrial injury through reverting hyperactivation of DRP1-mediated mitochondrial fission. This Bos taurus (Bovine) protein is F-box/LRR-repeat protein 4 (FBXL4).